We begin with the raw amino-acid sequence, 567 residues long: Urease subunit alpha (567 aa).

The Urease domain maps to 129–567; sequence GGVDTHIHWI…LPMAQRYFLF (439 aa). H134, H136, and K217 together coordinate Ni(2+). K217 carries the post-translational modification N6-carboxylysine. H219 provides a ligand contact to substrate. Ni(2+) contacts are provided by H246 and H272. Residue H320 is the Proton donor of the active site. D360 contacts Ni(2+).

It belongs to the metallo-dependent hydrolases superfamily. Urease alpha subunit family. Heterotrimer of UreA (gamma), UreB (beta) and UreC (alpha) subunits. Three heterotrimers associate to form the active enzyme. It depends on Ni cation as a cofactor. In terms of processing, carboxylation allows a single lysine to coordinate two nickel ions.

Its subcellular location is the cytoplasm. The catalysed reaction is urea + 2 H2O + H(+) = hydrogencarbonate + 2 NH4(+). It functions in the pathway nitrogen metabolism; urea degradation; CO(2) and NH(3) from urea (urease route): step 1/1. This chain is Urease subunit alpha, found in Escherichia coli O157:H7.